Reading from the N-terminus, the 50-residue chain is Insulin-1 (50 aa).

Disulfide bonds link Cys7–Cys36, Cys19–Cys49, and Cys35–Cys40.

The protein belongs to the insulin family. As to quaternary structure, heterodimer of a B chain and an A chain linked by two disulfide bonds.

The protein resides in the secreted. Functionally, insulin decreases blood glucose concentration. It increases cell permeability to monosaccharides, amino acids and fatty acids. It accelerates glycolysis, the pentose phosphate cycle, and glycogen synthesis in liver. The sequence is that of Insulin-1 from Thunnus orientalis (North Pacific bluefin tuna).